Here is a 351-residue protein sequence, read N- to C-terminus: Pinopsin (351 aa).

Topologically, residues 1–30 (MSSNSSQAPPNGTPGPFDGPQWPYQAPQST) are extracellular. The N-linked (GlcNAc...) asparagine glycan is linked to Asn4. A helical membrane pass occupies residues 31–55 (YVGVAVLMGTVVACASVVNGLVIVV). Residues 56–67 (SICYKKLRSPLN) are Cytoplasmic-facing. A helical membrane pass occupies residues 68-92 (YILVNLAVADLLVTLCGSSVSLSNN). At 93–107 (INGFFVFGRRMCELE) the chain is on the extracellular side. Residues Cys104 and Cys181 are joined by a disulfide bond. The helical transmembrane segment at 108–127 (GFMVSLTGIVGLWSLAILAL) threads the bilayer. Over 128-146 (ERYVVVCKPLGDFQFQRRH) the chain is Cytoplasmic. The helical transmembrane segment at 147-170 (AVSGCAFTWGWALLWSAPPLLGWS) threads the bilayer. Topologically, residues 171–194 (SYVPEGLRTSCGPNWYTGGSNNNS) are extracellular. An N-linked (GlcNAc...) asparagine glycan is attached at Asn192. A helical transmembrane segment spans residues 195 to 222 (YILSLFVTCFVLPLSLILFSYTNLLLTL). At 223–244 (RAAAAQQKEADTTQRAEREVTR) the chain is on the cytoplasmic side. A helical transmembrane segment spans residues 245-268 (MVIVMVMAFLLCWLPYSTFALVVA). Over 269–276 (THKGIIIQ) the chain is Extracellular. The helical transmembrane segment at 277-301 (PVLASLPSYFSKTATVYNPIIYVFM) threads the bilayer. The residue at position 288 (Lys288) is an N6-(retinylidene)lysine. The Cytoplasmic portion of the chain corresponds to 302-351 (NKQFQSCLLEMLCCGYQPQRTGKASPGTPGPHADVTAAGLRNKVMPAHPV). Residues Cys314 and Cys315 are each lipidated (S-palmitoyl cysteine).

Belongs to the G-protein coupled receptor 1 family. Opsin subfamily. Phosphorylated on some or all of the serine and threonine residues present in the C-terminal region. Pineal gland.

Its subcellular location is the membrane. Its function is as follows. Produces a slow and prolonged phototransduction response consistent with the non-visual function of pineal photoreception. The sequence is that of Pinopsin from Gallus gallus (Chicken).